We begin with the raw amino-acid sequence, 436 residues long: Chorion-specific transcription factor GCMa (436 aa).

Residues 14–169 constitute a DNA-binding region (GCM); that stretch reads LSWDINDVKL…KLEAEARRAM (156 aa). Residues Cys-76, Cys-82, Cys-86, Cys-113, Cys-116, Cys-125, His-152, and His-154 each contribute to the Zn(2+) site. The disordered stretch occupies residues 171–202; it reads KVNTAPSSVSLSLKGSTETRSLPGETQSQGSL. Positions 174 to 202 are enriched in polar residues; that stretch reads TAPSSVSLSLKGSTETRSLPGETQSQGSL.

In terms of processing, polyubiquitinated in the presence of UBE2D2 and FBXW2 (in vitro). As to expression, highly expressed in the placenta. Expressed in trophoblast cells of the villi.

The protein localises to the nucleus. Its function is as follows. Transcription factor involved in the control of expression of placental growth factor (PGF) and other placenta-specific genes. Binds to the trophoblast-specific element 2 (TSE2) of the aromatase gene enhancer. Binds to the SYDE1 promoter. Has a central role in mediating the differentiation of trophoblast cells along both the villous and extravillous pathways in placental development. This chain is Chorion-specific transcription factor GCMa (GCM1), found in Homo sapiens (Human).